Reading from the N-terminus, the 267-residue chain is Hydroxynaphthalene reductase-like protein Arp2 (267 aa).

NADP(+) contacts are provided by Ile-25, Asn-45, Asp-71, and Asn-98. Active-site proton donor residues include Ser-147 and Ser-148. 4 residues coordinate NADP(+): Tyr-162, Lys-166, Val-195, and Thr-197. Tyr-162 functions as the Proton acceptor in the catalytic mechanism. Residue Lys-166 is the Lowers pKa of active site Tyr of the active site.

This sequence belongs to the short-chain dehydrogenases/reductases (SDR) family.

Hydroxynaphthalene reductase-like protein; part of the Pks2 gene cluster that mediates the formation of infectious structures (appressoria), enabling these fungi to kill insects faster. The product of the Pks2 gene cluster is different from the one of Pks1 and has still not been identified. This chain is Hydroxynaphthalene reductase-like protein Arp2, found in Metarhizium majus (strain ARSEF 297).